Consider the following 192-residue polypeptide: Elongation factor P (192 aa).

It belongs to the elongation factor P family.

The protein resides in the cytoplasm. It functions in the pathway protein biosynthesis; polypeptide chain elongation. Involved in peptide bond synthesis. Stimulates efficient translation and peptide-bond synthesis on native or reconstituted 70S ribosomes in vitro. Probably functions indirectly by altering the affinity of the ribosome for aminoacyl-tRNA, thus increasing their reactivity as acceptors for peptidyl transferase. This is Elongation factor P from Borrelia garinii subsp. bavariensis (strain ATCC BAA-2496 / DSM 23469 / PBi) (Borreliella bavariensis).